The primary structure comprises 298 residues: Protoheme IX farnesyltransferase (298 aa).

The next 8 helical transmembrane spans lie at 26-46 (IVIL…GGPP), 48-68 (LGLT…ANAI), 110-130 (FLVL…GLLF), 147-167 (IVIG…AVTG), 174-194 (VIMF…LALF), 220-240 (ILLY…TGTV), 243-263 (LYLW…VGLL), and 276-296 (TYGW…LDVT).

This sequence belongs to the UbiA prenyltransferase family. Protoheme IX farnesyltransferase subfamily. Interacts with CtaA.

It localises to the cell membrane. It catalyses the reaction heme b + (2E,6E)-farnesyl diphosphate + H2O = Fe(II)-heme o + diphosphate. Its pathway is porphyrin-containing compound metabolism; heme O biosynthesis; heme O from protoheme: step 1/1. Converts heme B (protoheme IX) to heme O by substitution of the vinyl group on carbon 2 of heme B porphyrin ring with a hydroxyethyl farnesyl side group. This Symbiobacterium thermophilum (strain DSM 24528 / JCM 14929 / IAM 14863 / T) protein is Protoheme IX farnesyltransferase.